Here is a 456-residue protein sequence, read N- to C-terminus: Bifunctional protein GlmU (456 aa).

The interval 1-229 is pyrophosphorylase; that stretch reads MLNNAMSVVI…LSEVEGVNNR (229 aa). Residues 11–14, K25, Q76, 81–82, 103–105, G140, E154, N169, and N227 each bind UDP-N-acetyl-alpha-D-glucosamine; these read LAAG, GT, and YGD. D105 contributes to the Mg(2+) binding site. N227 contacts Mg(2+). The linker stretch occupies residues 230–250; sequence LQLSRLERVYQSEQAEKLLLA. Residues 251-456 form an N-acetyltransferase region; that stretch reads GVMLRDPARF…EGWRRPVKKK (206 aa). The UDP-N-acetyl-alpha-D-glucosamine site is built by R333 and K351. H363 (proton acceptor) is an active-site residue. UDP-N-acetyl-alpha-D-glucosamine contacts are provided by Y366 and N377. Acetyl-CoA-binding positions include A380, 386-387, S405, A423, and R440; that span reads NY.

The protein in the N-terminal section; belongs to the N-acetylglucosamine-1-phosphate uridyltransferase family. It in the C-terminal section; belongs to the transferase hexapeptide repeat family. In terms of assembly, homotrimer. Mg(2+) is required as a cofactor.

The protein localises to the cytoplasm. It carries out the reaction alpha-D-glucosamine 1-phosphate + acetyl-CoA = N-acetyl-alpha-D-glucosamine 1-phosphate + CoA + H(+). The catalysed reaction is N-acetyl-alpha-D-glucosamine 1-phosphate + UTP + H(+) = UDP-N-acetyl-alpha-D-glucosamine + diphosphate. The protein operates within nucleotide-sugar biosynthesis; UDP-N-acetyl-alpha-D-glucosamine biosynthesis; N-acetyl-alpha-D-glucosamine 1-phosphate from alpha-D-glucosamine 6-phosphate (route II): step 2/2. Its pathway is nucleotide-sugar biosynthesis; UDP-N-acetyl-alpha-D-glucosamine biosynthesis; UDP-N-acetyl-alpha-D-glucosamine from N-acetyl-alpha-D-glucosamine 1-phosphate: step 1/1. It functions in the pathway bacterial outer membrane biogenesis; LPS lipid A biosynthesis. Functionally, catalyzes the last two sequential reactions in the de novo biosynthetic pathway for UDP-N-acetylglucosamine (UDP-GlcNAc). The C-terminal domain catalyzes the transfer of acetyl group from acetyl coenzyme A to glucosamine-1-phosphate (GlcN-1-P) to produce N-acetylglucosamine-1-phosphate (GlcNAc-1-P), which is converted into UDP-GlcNAc by the transfer of uridine 5-monophosphate (from uridine 5-triphosphate), a reaction catalyzed by the N-terminal domain. The sequence is that of Bifunctional protein GlmU from Shigella boydii serotype 18 (strain CDC 3083-94 / BS512).